We begin with the raw amino-acid sequence, 312 residues long: DNA-directed RNA polymerase subunit alpha (312 aa).

An alpha N-terminal domain (alpha-NTD) region spans residues 1–229; that stretch reads MLQYQIDRID…ELFQPLATVT (229 aa). The tract at residues 246-312 is alpha C-terminal domain (alpha-CTD); that stretch reads IPLEELNLSV…ISIPQSRTSV (67 aa).

It belongs to the RNA polymerase alpha chain family. As to quaternary structure, in cyanobacteria the RNAP catalytic core is composed of 2 alpha, 1 beta, 1 beta', 1 gamma and 1 omega subunit. When a sigma factor is associated with the core the holoenzyme is formed, which can initiate transcription.

It carries out the reaction RNA(n) + a ribonucleoside 5'-triphosphate = RNA(n+1) + diphosphate. DNA-dependent RNA polymerase catalyzes the transcription of DNA into RNA using the four ribonucleoside triphosphates as substrates. This chain is DNA-directed RNA polymerase subunit alpha, found in Prochlorococcus marinus subsp. pastoris (strain CCMP1986 / NIES-2087 / MED4).